The sequence spans 637 residues: Transmembrane 9 superfamily member 10 (637 aa).

The signal sequence occupies residues 1 to 23 (MAKVRILIFTLVLFFSLNVHIHG). Over 24–274 (FYLPGVAPQD…YLLMADDQIH (251 aa)) the chain is Lumenal. The chain crosses the membrane as a helical span at residues 275 to 295 (WFSIVNSMMIVLFLSGMVAMI). The Cytoplasmic portion of the chain corresponds to 296–344 (MLRTLYRDISNYNQLESHEEALEETGWKLVHGDVFRPPTNPELLCVYAG). A helical transmembrane segment spans residues 345 to 365 (TGVQCFGMILVTMIFACLGFL). Residues 366 to 370 (SPSNR) lie on the Lumenal side of the membrane. Residues 371-391 (GGLMTAMLLLWVFMGLLAGYA) form a helical membrane-spanning segment. Topologically, residues 392–411 (SSRLYKTLRGTEWKRNALKT) are cytoplasmic. A helical transmembrane segment spans residues 412-432 (AFMFPATVFVAFFVLNAIIWG). The Lumenal portion of the chain corresponds to 433 to 444 (QKSSGAVPFGTM). The helical transmembrane segment at 445–465 (FALVVLWFGISVPLVFIGGYI) threads the bilayer. The Cytoplasmic portion of the chain corresponds to 466-494 (GFRKPAPEDPVKTNKIPRQIPTQAWYMNP). A helical membrane pass occupies residues 495 to 515 (IFSILIGGILPFGAVFIELFF). Over 516–527 (ILTSIWLHQFYY) the chain is Lumenal. Residues 528–548 (IFGFLFIVFIILIITCAEITV) form a helical membrane-spanning segment. Over 549–566 (VLCYFQLCSEDYQWWWRS) the chain is Cytoplasmic. Residues 567–587 (YLTSGSSAVYLFLYAVFYFYT) traverse the membrane as a helical segment. The Lumenal segment spans residues 588–593 (KLEITK). A helical membrane pass occupies residues 594-614 (LVSAVLYFGYMLIVSYVFFVF). The Cytoplasmic segment spans residues 615–637 (TGAIGFYACFWFTRLIYSSVKID). An Endoplasmic reticulum export signal motif is present at residues 626–631 (FTRLIY). The short motif at 635–637 (KID) is the Golgi retention signal element.

It belongs to the nonaspanin (TM9SF) (TC 9.A.2) family.

It is found in the endosome membrane. The protein resides in the golgi apparatus membrane. The protein is Transmembrane 9 superfamily member 10 of Arabidopsis thaliana (Mouse-ear cress).